The following is a 274-amino-acid chain: Formamidopyrimidine-DNA glycosylase (274 aa).

Pro2 functions as the Schiff-base intermediate with DNA in the catalytic mechanism. Glu3 functions as the Proton donor in the catalytic mechanism. Lys57 (proton donor; for beta-elimination activity) is an active-site residue. DNA is bound by residues His90, Arg109, and Lys150. The segment at 235 to 269 (FVYGRKDKACLICGHTIESIKQGQRSTFFCRHCQH) adopts an FPG-type zinc-finger fold. Arg259 (proton donor; for delta-elimination activity) is an active-site residue.

The protein belongs to the FPG family. In terms of assembly, monomer. Zn(2+) serves as cofactor.

It carries out the reaction Hydrolysis of DNA containing ring-opened 7-methylguanine residues, releasing 2,6-diamino-4-hydroxy-5-(N-methyl)formamidopyrimidine.. It catalyses the reaction 2'-deoxyribonucleotide-(2'-deoxyribose 5'-phosphate)-2'-deoxyribonucleotide-DNA = a 3'-end 2'-deoxyribonucleotide-(2,3-dehydro-2,3-deoxyribose 5'-phosphate)-DNA + a 5'-end 5'-phospho-2'-deoxyribonucleoside-DNA + H(+). Functionally, involved in base excision repair of DNA damaged by oxidation or by mutagenic agents. Acts as a DNA glycosylase that recognizes and removes damaged bases. Has a preference for oxidized purines, such as 7,8-dihydro-8-oxoguanine (8-oxoG). Has AP (apurinic/apyrimidinic) lyase activity and introduces nicks in the DNA strand. Cleaves the DNA backbone by beta-delta elimination to generate a single-strand break at the site of the removed base with both 3'- and 5'-phosphates. The sequence is that of Formamidopyrimidine-DNA glycosylase from Proteus mirabilis (strain HI4320).